Consider the following 197-residue polypeptide: Phosphoheptose isomerase (197 aa).

The region spanning 34–196 (MVQCLLGGNK…DRTLFPQDEQ (163 aa)) is the SIS domain. Position 49-51 (49-51 (NGG)) interacts with substrate. Residues His-58 and Glu-62 each contribute to the Zn(2+) site. Substrate-binding positions include Glu-62, 91–92 (ND), 117–119 (STS), Ser-122, and Gln-172. Zn(2+)-binding residues include Gln-172 and His-180.

The protein belongs to the SIS family. GmhA subfamily. Homotetramer. Zn(2+) serves as cofactor.

Its subcellular location is the cytoplasm. The catalysed reaction is 2 D-sedoheptulose 7-phosphate = D-glycero-alpha-D-manno-heptose 7-phosphate + D-glycero-beta-D-manno-heptose 7-phosphate. The protein operates within carbohydrate biosynthesis; D-glycero-D-manno-heptose 7-phosphate biosynthesis; D-glycero-alpha-D-manno-heptose 7-phosphate and D-glycero-beta-D-manno-heptose 7-phosphate from sedoheptulose 7-phosphate: step 1/1. In terms of biological role, catalyzes the isomerization of sedoheptulose 7-phosphate in D-glycero-D-manno-heptose 7-phosphate. The chain is Phosphoheptose isomerase from Shewanella frigidimarina (strain NCIMB 400).